Here is a 306-residue protein sequence, read N- to C-terminus: UDP-N-acetylenolpyruvoylglucosamine reductase (306 aa).

In terms of domain architecture, FAD-binding PCMH-type spans 28 to 193 (KVGGPADFLA…VSAKFSLKPG (166 aa)). Residue arginine 172 is part of the active site. Residue serine 222 is the Proton donor of the active site. Glutamate 292 is a catalytic residue.

This sequence belongs to the MurB family. FAD is required as a cofactor.

Its subcellular location is the cytoplasm. The catalysed reaction is UDP-N-acetyl-alpha-D-muramate + NADP(+) = UDP-N-acetyl-3-O-(1-carboxyvinyl)-alpha-D-glucosamine + NADPH + H(+). The protein operates within cell wall biogenesis; peptidoglycan biosynthesis. Cell wall formation. In Streptococcus mutans serotype c (strain ATCC 700610 / UA159), this protein is UDP-N-acetylenolpyruvoylglucosamine reductase.